A 312-amino-acid chain; its full sequence is Glycine--tRNA ligase alpha subunit (312 aa).

The protein belongs to the class-II aminoacyl-tRNA synthetase family. Tetramer of two alpha and two beta subunits.

It localises to the cytoplasm. The enzyme catalyses tRNA(Gly) + glycine + ATP = glycyl-tRNA(Gly) + AMP + diphosphate. This chain is Glycine--tRNA ligase alpha subunit (glyQ), found in Buchnera aphidicola subsp. Acyrthosiphon pisum (strain APS) (Acyrthosiphon pisum symbiotic bacterium).